Here is a 641-residue protein sequence, read N- to C-terminus: Sodium-dependent nutrient amino acid transporter 1 (641 aa).

The tract at residues 1 to 38 is disordered; the sequence is MELKGVQPSNGSSNGSGNGATNAASTEKTDAEKPTAER. Topologically, residues 1–40 are cytoplasmic; sequence MELKGVQPSNGSSNGSGNGATNAASTEKTDAEKPTAERTN. Positions 9 to 26 are enriched in low complexity; that stretch reads SNGSSNGSGNGATNAAST. Positions 27-36 are enriched in basic and acidic residues; that stretch reads EKTDAEKPTA. 3 helical membrane-spanning segments follow: residues 41 to 61, 74 to 94, and 111 to 131; these read WGNG…LGNV, GAFL…MYYL, and SVVP…ICII. 2 N-linked (GlcNAc...) asparagine glycosylation sites follow: Asn185 and Asn190. The next 9 helical transmembrane spans lie at 229 to 249, 258 to 278, 307 to 327, 341 to 361, 401 to 421, 447 to 467, 474 to 494, 516 to 536, and 552 to 572; these read PDWK…LVIM, AAYF…IRAV, AVVQ…MFAS, IVTT…FAIL, LFSV…IVAL, VCGF…ILTL, TYVV…VYGL, CWSF…MVTI, and IAGW…GLWY.

It belongs to the sodium:neurotransmitter symporter (SNF) (TC 2.A.22) family. As to expression, in larvae, weak specific expression in the anterior midgut just proximal to the gastric caeca reproductive rudiments, common ureters of the Malpighian tubules, and distal swollen portion of the anterior pair of Malpighian tubules. Expression is also seen in the imaginal disks of the head; brain hemispheres and the ventral ganglion. Stronger expression in the posterior midgut.

The protein localises to the membrane. In terms of biological role, unusual broad substrate spectrum amino acid:sodium cotransporter that promotes absorption of the D isomers of essential amino acids. Neutral amino acids are the preferred substrates, especially methionine and phenylalanine. The sequence is that of Sodium-dependent nutrient amino acid transporter 1 (NAAT1) from Drosophila melanogaster (Fruit fly).